The sequence spans 100 residues: Small ribosomal subunit protein bS21 (100 aa).

The tract at residues 61–100 is disordered; sequence KLQREGLLPMKPKPVFGAGPGGDRGRGPAAGAGAGPRGPR. The segment covering 78–100 has biased composition (gly residues); that stretch reads AGPGGDRGRGPAAGAGAGPRGPR.

It belongs to the bacterial ribosomal protein bS21 family.

The polypeptide is Small ribosomal subunit protein bS21 (Rhodopseudomonas palustris (strain BisB18)).